We begin with the raw amino-acid sequence, 419 residues long: Sphingomyelin phosphodiesterase 2 (419 aa).

Glu-49 is a Mg(2+) binding site. His-272 serves as the catalytic Proton acceptor. A run of 2 helical transmembrane segments spans residues 326–346 (FSGYVIVWGLSLLVLLCVLAA) and 354–374 (AIILCIPSVGLVLVAGAVYLF).

Belongs to the neutral sphingomyelinase family. Mg(2+) serves as cofactor. In terms of tissue distribution, although widely expressed in all tissues examined, except the spleen, high enzymatic activity occurs only in the brain.

Its subcellular location is the cell membrane. It catalyses the reaction a sphingomyelin + H2O = phosphocholine + an N-acylsphing-4-enine + H(+). The catalysed reaction is an N-(acyl)-sphingosylphosphocholine + H2O = an N-acyl-sphingoid base + phosphocholine + H(+). The enzyme catalyses 1-O-octadecyl-sn-glycero-3-phosphocholine + H2O = 1-O-octadecyl-sn-glycerol + phosphocholine + H(+). It carries out the reaction 1-hexadecanoyl-sn-glycero-3-phosphocholine + H2O = 1-hexadecanoyl-sn-glycerol + phosphocholine + H(+). It catalyses the reaction a sphingosylphosphocholine + H2O = a sphingoid base + phosphocholine + H(+). The catalysed reaction is 1-O-hexadecyl-sn-glycero-3-phosphocholine + H2O = 1-O-hexadecyl-sn-glycerol + phosphocholine + H(+). It participates in lipid metabolism; sphingolipid metabolism. Its activity is regulated as follows. Activated by arachidonic acid. Its function is as follows. Catalyzes, at least in vitro, the hydrolysis of sphingomyelin to form ceramide and phosphocholine. Also hydrolyzes 1-O-alkyl-2-lyso-sn-glycero-3-phosphocholine (lyso-platelet-activating factor) in vivo. Also acts on 1-acyl-2-lyso-sn-glycero-3-phosphocholine (lyso-PC) and sphingosylphosphocholine. The polypeptide is Sphingomyelin phosphodiesterase 2 (Mus musculus (Mouse)).